The following is a 227-amino-acid chain: ATP-dependent dethiobiotin synthetase BioD (227 aa).

13-18 (DVGKTV) is an ATP binding site. Threonine 17 lines the Mg(2+) pocket. The active site involves lysine 38. ATP-binding positions include aspartate 55, 116–119 (EGAG), and 176–177 (NR). Mg(2+) is bound by residues aspartate 55 and glutamate 116.

This sequence belongs to the dethiobiotin synthetase family. In terms of assembly, homodimer. Requires Mg(2+) as cofactor.

The protein resides in the cytoplasm. It carries out the reaction (7R,8S)-7,8-diammoniononanoate + CO2 + ATP = (4R,5S)-dethiobiotin + ADP + phosphate + 3 H(+). It functions in the pathway cofactor biosynthesis; biotin biosynthesis; biotin from 7,8-diaminononanoate: step 1/2. Catalyzes a mechanistically unusual reaction, the ATP-dependent insertion of CO2 between the N7 and N8 nitrogen atoms of 7,8-diaminopelargonic acid (DAPA, also called 7,8-diammoniononanoate) to form a ureido ring. The chain is ATP-dependent dethiobiotin synthetase BioD from Aliivibrio salmonicida (strain LFI1238) (Vibrio salmonicida (strain LFI1238)).